The chain runs to 1220 residues: Myosin-2 (1220 aa).

Residues 1 to 12 (MMLSASPNTLAK) show a composition bias toward polar residues. 2 disordered regions span residues 1 to 54 (MMLS…ARRS) and 68 to 95 (QNGS…RKEK). Residues 20-33 (ESLRQKDECDRPKD) show a composition bias toward basic and acidic residues. The segment covering 40 to 54 (SRPNSRARLPSARRS) has biased composition (low complexity). Residues 82-95 (ESERKEEGVKRKEK) show a composition bias toward basic and acidic residues. In terms of domain architecture, Myosin N-terminal SH3-like spans 160 to 209 (KKKLRVWCRVSNGQWQLGKIQSTSADTSLVMLSTANVVKVSTEELFPANP). The Myosin motor domain maps to 213-879 (EGVEDLIQLS…QIGIFEDRRK (667 aa)). ATP-binding positions include 304–311 (GESGAGKT) and 353–361 (NANSSRFGK). 2 actin-binding regions span residues 638–672 (LIEK…KQHL) and 759–781 (LFKL…KPNS). 3 IQ domains span residues 881–910 (VLQG…VTLV), 904–933 (MRKV…FHAD), and 942–971 (ELSA…QKEL). Disordered stretches follow at residues 968–1007 (QKEL…MSDL) and 1075–1118 (SITG…NGNT). 2 stretches are compositionally biased toward polar residues: residues 997-1006 (PQVQPTSMSD) and 1098-1118 (TMST…NGNT). Residues 1003–1071 (SMSDLQKRIL…MSLAAARKSL (69 aa)) are a coiled coil.

Belongs to the TRAFAC class myosin-kinesin ATPase superfamily. Myosin family. Plant myosin class VIII subfamily. Homodimer. In terms of tissue distribution, expressed in flowers, leaves and roots.

It is found in the cell junction. The protein resides in the plasmodesma. The protein localises to the endosome. Functionally, myosin heavy chain that is required for the cell cycle-regulated transport of various organelles and proteins for their segregation. Functions by binding with its tail domain to receptor proteins on organelles and exerting force with its N-terminal motor domain against actin filaments, thereby transporting its cargo along polarized actin cables. Involved in endocytosis via its action in endosomal trafficking. The polypeptide is Myosin-2 (VIII-2) (Arabidopsis thaliana (Mouse-ear cress)).